A 183-amino-acid chain; its full sequence is Apo-citrate lyase phosphoribosyl-dephospho-CoA transferase (183 aa).

The protein belongs to the CitX family.

The catalysed reaction is apo-[citrate lyase ACP] + 2'-(5''-triphospho-alpha-D-ribosyl)-3'-dephospho-CoA = holo-[citrate lyase ACP] + diphosphate. Transfers 2-(5''-triphosphoribosyl)-3'-dephosphocoenzyme-A on a serine residue to the apo-acyl carrier protein (gamma chain) of the citrate lyase to yield holo-acyl carrier protein. This is Apo-citrate lyase phosphoribosyl-dephospho-CoA transferase from Escherichia coli O139:H28 (strain E24377A / ETEC).